The following is a 410-amino-acid chain: Transcription factor PHYTOCHROME INTERACTING FACTOR-LIKE 13 (410 aa).

A compositionally biased stretch (low complexity) spans 82-92 (AAAAAGPSSHH). 2 disordered regions span residues 82–110 (AAAAAGPSSHHAPPPDLPPPAARPPMRSG) and 137–225 (CRDA…AEVH). A compositionally biased stretch (pro residues) spans 93-104 (APPPDLPPPAAR). A compositionally biased stretch (basic and acidic residues) spans 187–197 (GREDSDSRSED). Residues 209-219 (SSRRYGSKRRT) are compositionally biased toward basic residues. A basic motif region spans residues 220-233 (RAAEVHNLSERRRR). One can recognise a bHLH domain in the interval 220–269 (RAAEVHNLSERRRRDRINEKMRALQELIPHCNKTDKASILDEAIEYLKSL). Residues 234-269 (DRINEKMRALQELIPHCNKTDKASILDEAIEYLKSL) form a helix-loop-helix motif region. The interval 357–410 (PFLHPDGWQTVPPQVSGPYASGPQVAQQNQIPKASASTVLPNSGAEQPPTSDGI) is disordered. A compositionally biased stretch (polar residues) spans 380–410 (QVAQQNQIPKASASTVLPNSGAEQPPTSDGI).

It belongs to the bHLH protein family. In terms of assembly, interacts with PRR1. Interacts with LF. In terms of tissue distribution, highly expressed in the node portions of the stem. Expressed in the leaves and the basal part of shoots.

The protein resides in the nucleus. Functionally, transcription factor that may act as negative regulator of phyB-dependent light signal transduction. Transcription activator that acts as a positive regulator of internode elongation. May function via regulation of cell wall-related genes. May play a role in a drought-associated growth-restriction mechanism in response to drought stress. This Oryza sativa subsp. japonica (Rice) protein is Transcription factor PHYTOCHROME INTERACTING FACTOR-LIKE 13.